A 670-amino-acid polypeptide reads, in one-letter code: MSISTSLNSASIHLSSMDTHPQLHSLTRQPHSSSTAMSKNEAQESSPSLPASSSSSTSASASASSKNSSKNPSSWDPQDDLLLRHLKEVKKMGWKDISQYFPNRTPNACQFRWRRLKSGNLKSNKTALIDINTYTGPLKITHGDETANAQQKPSKKVEENVLTEDTAEFTTTSSIPIPSRKTSLPSFHASMSFSQSPSNVTPTTIVSNAASSMPFAPPTLPAALPHHPHQHLHHHPHHKTLKPRSNSHSFTNSLNQDPIVRSNDEEKYGFIPKVFVRSRRSSFAYPQQVAITTTPSSPNSSHVLLSSKSRRGSLANWSRRSSFNVSSNNTSRRSSMILAPNSVSNIFNVNNSGSNTASTSNTNSRRESVIKKEFQQRLNNLSNSGGPTSNNGPIFPNSYTFMDLPHSSSVSSSSTLHKSKRGSFSGHSMKSSCNPTNLWSKDEDALLMENKKRNLSVMELSILLPQRTEVEIQWRLNALSSDADMLSPTHSPQKTLSKKTCPRMFKSGSTTDDDKGSDKEDVMGDGSNDDDEDNVDPLHRAKQSSNKTVFSSSSSNISSKDVSPDPIFSPDPADDSSNTSDAGSRCTITSDTSSSAATMNRTPNSKNPQDIALLNNFRSEAITPRPKPSSTTTSITTETTNNMINHSSSTTTTTNNSPLPSINTIFKDML.

Residues M1–E44 show a composition bias toward polar residues. Residues M1–Q78 form a disordered region. Residues S45 to S74 show a composition bias toward low complexity. The HTH myb-type domain maps to N67 to L121. A DNA-binding region (H-T-H motif) is located at residues W94–K117. Basic residues predominate over residues H226–K242. 4 disordered regions span residues H226 to F250, T293 to R332, H406 to T436, and A483 to L659. Phosphoserine occurs at positions 245 and 247. 2 stretches are compositionally biased toward low complexity: residues P295 to S307 and N316 to R332. Polar residues predominate over residues S425–T436. Phosphoserine is present on S487. T489 is modified (phosphothreonine). S491 is subject to Phosphoserine. The segment covering D512–V522 has biased composition (basic and acidic residues). Composition is skewed to low complexity over residues S544–D561 and T587–T598. Polar residues predominate over residues M599–P608. A compositionally biased stretch (low complexity) spans I622–L659.

Belongs to the DOT6 family. Component of the RPD3C(L) complex composed of at least ASH1, CTI6, DEP1, DOT6, PHO23, RPD3, RXT2, RXT3, SAP30, SDS3, SIN3, TOD6; UME1 and UME6.

It localises to the nucleus. Component of the RPD3 histone deacetylase complex RPD3C(L) responsible for the deacetylation of lysine residues on the N-terminal part of the core histones (H2A, H2B, H3 and H4). Histone deacetylation gives a tag for epigenetic repression and plays an important role in transcriptional regulation, cell cycle progression and developmental events. DOT6 binds to sequences containing the core CGATG, which resembles the PAC (Polymerase A and C) motif. The sequence is that of Transcriptional regulatory protein DOT6 (DOT6) from Saccharomyces cerevisiae (strain ATCC 204508 / S288c) (Baker's yeast).